A 100-amino-acid polypeptide reads, in one-letter code: Small ribosomal subunit protein uS14 (100 aa).

This sequence belongs to the universal ribosomal protein uS14 family. In terms of assembly, part of the 30S ribosomal subunit. Contacts proteins S3 and S10.

In terms of biological role, binds 16S rRNA, required for the assembly of 30S particles and may also be responsible for determining the conformation of the 16S rRNA at the A site. This is Small ribosomal subunit protein uS14 from Synechococcus sp. (strain CC9311).